The chain runs to 512 residues: MKSKKQTKLLLILDGWGYSETIQNNAIALANTPVWDKLNQTFLHSLIHTSGKDVGLPGKQMGNSEVGHLNLGAGRIVKQDFTRIYNELQNGDFFRNPILKNSLEYANDNNKAVHIMGLLSDGGVHSHEEQIHAMLEMTHKQGCKNVYLHLFTDGRDCAQKSAEKYIQKFEEKMAILGTGEIVSIIGRYFSMDRDNRWSRIRCAYELIAKGKAKFLAQSALHAVELAYARGETDEFIQSTSIKIPISIKKGDVLIFMNYRADRARQITRAFTDENLQGFSRGTFVPTQFICLTEYKKDFNLPVAYPSSKLNNVLGKYLSNLGMTQLRIAETEKYAHVTFFLNGGVEQAFNGEDRILIPSPDVATYDLQPEMSAFELTDALIESIESQKYDLIICNFANTDMVGHSGKLNATIKAVETIDSCLGIIHKAMFAISGEILITADHGNAEQMINPKTHEVHTAHTNNPVPLIFVSERKADISEPEKGALSDIAPTLLAMMDIEKPNEMTGNSLLTFK.

The Mn(2+) site is built by Asp-14 and Ser-64. The Phosphoserine intermediate role is filled by Ser-64. Substrate is bound by residues His-125, Arg-155–Asp-156, Arg-187, Arg-193, Arg-259–Arg-262, and Lys-332. Mn(2+)-binding residues include Asp-399, His-403, Asp-440, His-441, and His-459.

The protein belongs to the BPG-independent phosphoglycerate mutase family. In terms of assembly, monomer. The cofactor is Mn(2+).

The enzyme catalyses (2R)-2-phosphoglycerate = (2R)-3-phosphoglycerate. Its pathway is carbohydrate degradation; glycolysis; pyruvate from D-glyceraldehyde 3-phosphate: step 3/5. Functionally, catalyzes the interconversion of 2-phosphoglycerate and 3-phosphoglycerate. The chain is 2,3-bisphosphoglycerate-independent phosphoglycerate mutase from Ruthia magnifica subsp. Calyptogena magnifica.